A 262-amino-acid chain; its full sequence is Sugar fermentation stimulation protein homolog (262 aa).

This sequence belongs to the SfsA family.

In Lawsonia intracellularis (strain PHE/MN1-00), this protein is Sugar fermentation stimulation protein homolog.